We begin with the raw amino-acid sequence, 213 residues long: 3-hexulose-6-phosphate synthase 2 (213 aa).

This sequence belongs to the HPS/KGPDC family. HPS subfamily.

The catalysed reaction is D-ribulose 5-phosphate + formaldehyde = D-arabino-hex-3-ulose 6-phosphate. It participates in one-carbon metabolism; formaldehyde assimilation via RuMP pathway; D-fructose 6-phosphate from D-ribulose 5-phosphate and formaldehyde: step 1/2. Its function is as follows. Catalyzes the condensation of ribulose 5-phosphate with formaldehyde to form 3-hexulose 6-phosphate. The chain is 3-hexulose-6-phosphate synthase 2 from Staphylococcus saprophyticus subsp. saprophyticus (strain ATCC 15305 / DSM 20229 / NCIMB 8711 / NCTC 7292 / S-41).